We begin with the raw amino-acid sequence, 89 residues long: Cell division topological specificity factor (89 aa).

The protein belongs to the MinE family.

Functionally, prevents the cell division inhibition by proteins MinC and MinD at internal division sites while permitting inhibition at polar sites. This ensures cell division at the proper site by restricting the formation of a division septum at the midpoint of the long axis of the cell. The sequence is that of Cell division topological specificity factor from Yersinia pestis bv. Antiqua (strain Angola).